The sequence spans 98 residues: DNA-directed RNA polymerase subunit omega (98 aa).

The protein belongs to the RNA polymerase subunit omega family. In terms of assembly, the RNAP catalytic core consists of 2 alpha, 1 beta, 1 beta' and 1 omega subunit. When a sigma factor is associated with the core the holoenzyme is formed, which can initiate transcription.

It catalyses the reaction RNA(n) + a ribonucleoside 5'-triphosphate = RNA(n+1) + diphosphate. In terms of biological role, promotes RNA polymerase assembly. Latches the N- and C-terminal regions of the beta' subunit thereby facilitating its interaction with the beta and alpha subunits. In Tropheryma whipplei (strain Twist) (Whipple's bacillus), this protein is DNA-directed RNA polymerase subunit omega.